The sequence spans 61 residues: Large ribosomal subunit protein bL28 (61 aa).

Belongs to the bacterial ribosomal protein bL28 family.

The sequence is that of Large ribosomal subunit protein bL28 from Geobacillus thermodenitrificans (strain NG80-2).